Here is a 151-residue protein sequence, read N- to C-terminus: Ribosome maturation factor RimP (151 aa).

The protein belongs to the RimP family.

The protein resides in the cytoplasm. In terms of biological role, required for maturation of 30S ribosomal subunits. The protein is Ribosome maturation factor RimP of Persephonella marina (strain DSM 14350 / EX-H1).